The chain runs to 527 residues: MADSRDPASDQMKLWKEQRAAQKPDVLTTGGGNPIGDKLNVMTAGPRGPLLVQDVVFTDEMAHFDRERIPERVVHAKGAGAFGYFEVTHDITKYSKAKVFEHIGKRTPIAVRFSTVAGESGSADTVRDPRGFAVKFYTEDGNWDLVGNNTPIFFIRDAILFPSFIHSQKRNPQTHLKDPDMVWDFWSLRPESLHQVSFLFSDRGIPDGHRHMNGYGSHTFKLVNAAGEAVYCKFHYKTDQGIKNLSVEDAARLSHEDPDYGLRDLFNAIATGNYPSWTFYIQVMTFSQAETFPFNPFDLTKIWPHQDYPLIPVGKLVLNRNPVNYFAEVEQMAFDPSNMPPGIEPSPDKMLQGRLFAYPDTHRHRLGPNYLQIPVNCPFRARVANYQRDGPMCMLDNQGGAPNYYPNSFSAPEQQRCVLEHSSQCSPDVQRFNSANEDNVTQVRTFYLKVLGEEERKRLCENIAGHLKDAQLFIQKKAVKNFSDVHPDYGARIQALLDKYNAEKPKNAIHTFMQHGSHLAAREKANL.

Positions 1-22 (MADSRDPASDQMKLWKEQRAAQ) are enriched in basic and acidic residues. Residues 1–34 (MADSRDPASDQMKLWKEQRAAQKPDVLTTGGGNP) form a disordered region. An N-acetylalanine modification is found at Ala2. Ser9 is modified (phosphoserine). Lys13 is subject to N6-succinyllysine. Residues His75 and Asn148 contribute to the active site. Residues His194, Ser201, Arg203, and Asn213 each coordinate NADP(+). Position 221 is an N6-succinyllysine (Lys221). An N6-acetyllysine modification is found at Lys233. The NADP(+) site is built by Lys237, Trp303, and His305. Residue Tyr358 participates in heme binding. Ser422 and Ser434 each carry phosphoserine. Residues Lys449 and Lys480 each carry the N6-acetyllysine; alternate modification. N6-succinyllysine; alternate occurs at positions 449 and 480. Lys499 bears the N6-acetyllysine mark. A Phosphothreonine modification is found at Thr511. The residue at position 517 (Ser517) is a Phosphoserine. Positions 524–527 (KANL) match the Microbody targeting signal; atypical motif.

The protein belongs to the catalase family. Homotetramer. Interacts (via microbody targeting signal) with PEX5, monomeric form interacts with PEX5, leading to its translocation into peroxisomes. It depends on heme as a cofactor. NADP(+) serves as cofactor.

The protein resides in the peroxisome matrix. It catalyses the reaction 2 H2O2 = O2 + 2 H2O. Functionally, catalyzes the degradation of hydrogen peroxide (H(2)O(2)) generated by peroxisomal oxidases to water and oxygen, thereby protecting cells from the toxic effects of hydrogen peroxide. Promotes growth of cells including T-cells, B-cells, myeloid leukemia cells, melanoma cells, mastocytoma cells and normal and transformed fibroblast cells. The chain is Catalase (CAT) from Canis lupus familiaris (Dog).